The primary structure comprises 513 residues: ATP synthase subunit alpha 2 (513 aa).

Residue 169-176 (GDRQTGKT) coordinates ATP.

This sequence belongs to the ATPase alpha/beta chains family. In terms of assembly, F-type ATPases have 2 components, CF(1) - the catalytic core - and CF(0) - the membrane proton channel. CF(1) has five subunits: alpha(3), beta(3), gamma(1), delta(1), epsilon(1). CF(0) has three main subunits: a(1), b(2) and c(9-12). The alpha and beta chains form an alternating ring which encloses part of the gamma chain. CF(1) is attached to CF(0) by a central stalk formed by the gamma and epsilon chains, while a peripheral stalk is formed by the delta and b chains.

The protein localises to the cell inner membrane. The catalysed reaction is ATP + H2O + 4 H(+)(in) = ADP + phosphate + 5 H(+)(out). Produces ATP from ADP in the presence of a proton gradient across the membrane. The alpha chain is a regulatory subunit. This chain is ATP synthase subunit alpha 2, found in Pseudoalteromonas atlantica (strain T6c / ATCC BAA-1087).